A 361-amino-acid polypeptide reads, in one-letter code: Free fatty acid receptor 4 (361 aa).

Residues 1–45 lie on the Extracellular side of the membrane; the sequence is MSPECARAAGDAPLRSLEQANRTRFPFFSDVKGDHRLVLAAVETT. N21 carries N-linked (GlcNAc...) asparagine glycosylation. A helical membrane pass occupies residues 46-66; sequence VLVLIFAVSLLGNVCALVLVA. Topologically, residues 67 to 77 are cytoplasmic; sequence RRRRRGATACL. The chain crosses the membrane as a helical span at residues 78–98; sequence VLNLFCADLLFISAIPLVLAV. The Extracellular portion of the chain corresponds to 99 to 112; that stretch reads RWTEAWLLGPVACH. A disulfide bridge links C111 with C194. A helical transmembrane segment spans residues 113 to 133; sequence LLFYVMTLSGSVTILTLAAVS. Residues 134 to 156 lie on the Cytoplasmic side of the membrane; it reads LERMVCIVHLQRGVRGPGRRARA. A helical membrane pass occupies residues 157–177; it reads VLLALIWGYSAVAALPLCVFF. Topologically, residues 178–204 are extracellular; sequence RVVPQRLPGADQEISICTLIWPTIPGE. A helical transmembrane segment spans residues 205–225; that stretch reads ISWDVSFVTLNFLVPGLVIVI. The Cytoplasmic portion of the chain corresponds to 226 to 268; that stretch reads SYSKILQITKASRKRLTVSLAYSESHQIRVSQQDFRLFRTLFL. Residues 269–289 form a helical membrane-spanning segment; it reads LMVSFFIMWSPIIITILLILI. Over 290-295 the chain is Extracellular; it reads QNFKQD. Residues 296-316 traverse the membrane as a helical segment; it reads LVIWPSLFFWVVAFTFANSAL. At 317–361 the chain is on the cytoplasmic side; that stretch reads NPILYNMTLCRNEWKKIFCCFWFPEKGAILTDTSVKRNDLSIISG. Residues T347 and T349 each carry the phosphothreonine modification. A phosphoserine mark is found at S350, S357, and S360.

This sequence belongs to the G-protein coupled receptor 1 family. As to quaternary structure, interacts (via C-terminus) with ARRB2 following LCFAs stimulation. Phosphorylated at two clusters of Ser and Thr residues located in the intracellular C-terminus, a prerequisite for FFAR4 internalization via an ARRB2-dependent pathway. The predominant isoform in human tissues. Expressed in adipose tissue, pancreatic islets, lung and brain. Expressed in alpha cells of pancreatic islets. Expressed in primary cilia of perivascular preadipocytes of white adipose tissue (at protein level). In terms of tissue distribution, abundant expression in the intestinal tract. Expressed in colonic intraepithelial neuroendocrine cells.

Its subcellular location is the cell membrane. It is found in the endosome membrane. The protein localises to the lysosome membrane. The protein resides in the cell projection. It localises to the cilium membrane. G-protein-coupled receptor for long-chain fatty acids (LCFAs) with a major role in adipogenesis, energy metabolism and inflammation. Signals via G-protein and beta-arrestin pathways. LCFAs sensing initiates activation of phosphoinositidase C-linked G proteins GNAQ and GNA11 (G(q)/G(11)), inducing a variety of cellular responses via second messenger pathways such as intracellular calcium mobilization, modulation of cyclic adenosine monophosphate (cAMP) production, and mitogen-activated protein kinases (MAPKs). After LCFAs binding, associates with beta-arrestin ARRB2 that acts as an adapter protein coupling the receptor to specific downstream signaling pathways, as well as mediating receptor endocytosis. In response to dietary fats, plays an important role in the regulation of adipocyte proliferation and differentiation. Acts as a receptor for omega-3 polyunsaturated fatty acids (PUFAs) at primary cilium of perivascular preadipocytes, initiating an adipogenic program via cAMP and CTCF-dependent chromatin remodeling that ultimately results in transcriptional activation of adipogenic genes and cell cycle entry. Induces differentiation of brown adipocytes probably via autocrine and endocrine functions of FGF21 hormone. Activates brown adipocytes by initiating intracellular calcium signaling that leads to mitochondrial depolarization and fission, and overall increased mitochondrial respiration. Consequently stimulates fatty acid uptake and oxidation in mitochondria together with UCP1-mediated thermogenic respiration, eventually reducing fat mass. Regulates bi-potential differentiation of bone marrow mesenchymal stem cells toward osteoblasts or adipocytes likely by up-regulating distinct integrins. In response to dietary fats regulates hormone secretion and appetite. Stimulates GIP and GLP1 secretion from enteroendocrine cells as well as GCG secretion in pancreatic alpha cells, thereby playing a role in the regulation of blood glucose levels. Negatively regulates glucose-induced SST secretion in pancreatic delta cells. Mediates LCFAs inhibition of GHRL secretion, an appetite-controlling hormone. In taste buds, contributes to sensing of dietary fatty acids by the gustatory system. During the inflammatory response, promotes anti-inflammatory M2 macrophage differentiation in adipose tissue. Mediates the anti-inflammatory effects of omega-3 PUFAs via inhibition of NLRP3 inflammasome activation. In this pathway, interacts with adapter protein ARRB2 and inhibits the priming step triggered by Toll-like receptors (TLRs) at the level of TAK1 and TAB1. Further inhibits the activation step when ARRB2 directly associates with NLRP3, leading to inhibition of pro-inflammatory cytokine release. Mediates LCFAs anti-apoptotic effects. In terms of biological role, receptor for LCFAs decoupled from G-protein signaling. May signal through beta-arrestin pathway. After LCFAs binding, associates with beta-arrestin ARRB2 that may act as an adapter protein coupling the receptor to specific downstream signaling pathways, as well as mediating receptor endocytosis. The polypeptide is Free fatty acid receptor 4 (Homo sapiens (Human)).